The chain runs to 412 residues: Exodeoxyribonuclease 7 large subunit (412 aa).

Belongs to the XseA family. Heterooligomer composed of large and small subunits.

Its subcellular location is the cytoplasm. The enzyme catalyses Exonucleolytic cleavage in either 5'- to 3'- or 3'- to 5'-direction to yield nucleoside 5'-phosphates.. Bidirectionally degrades single-stranded DNA into large acid-insoluble oligonucleotides, which are then degraded further into small acid-soluble oligonucleotides. This Nostoc sp. (strain PCC 7120 / SAG 25.82 / UTEX 2576) protein is Exodeoxyribonuclease 7 large subunit.